The sequence spans 85 residues: uncharacterized protein (85 aa).

The span at 64–76 shows a compositional bias: basic and acidic residues; that stretch reads DPPVRRSGGREQH. Positions 64 to 85 are disordered; the sequence is DPPVRRSGGREQHLAQVWRATS.

This is an uncharacterized protein from Mycobacterium bovis (strain ATCC BAA-935 / AF2122/97).